Consider the following 661-residue polypeptide: UvrABC system protein B (661 aa).

The Helicase ATP-binding domain occupies 28-414 (DGVNERKRHQ…HTDEMVEQII (387 aa)). 41–48 (GATGTGKT) serves as a coordination point for ATP. A Beta-hairpin motif is present at residues 94-117 (YYDYYQPEAYVPSTDTFIEKDASI). Positions 432–598 (QIDDLLSEIQ…TINKKIHDVI (167 aa)) constitute a Helicase C-terminal domain. Residues 603-624 (ESDETNQQQQTELPKKMTKKER) are disordered. The UVR domain maps to 625–660 (QKTIENIEKEMKKAAKDLDFEKATELRDMLFELKAE).

This sequence belongs to the UvrB family. In terms of assembly, forms a heterotetramer with UvrA during the search for lesions. Interacts with UvrC in an incision complex.

Its subcellular location is the cytoplasm. Its function is as follows. The UvrABC repair system catalyzes the recognition and processing of DNA lesions. A damage recognition complex composed of 2 UvrA and 2 UvrB subunits scans DNA for abnormalities. Upon binding of the UvrA(2)B(2) complex to a putative damaged site, the DNA wraps around one UvrB monomer. DNA wrap is dependent on ATP binding by UvrB and probably causes local melting of the DNA helix, facilitating insertion of UvrB beta-hairpin between the DNA strands. Then UvrB probes one DNA strand for the presence of a lesion. If a lesion is found the UvrA subunits dissociate and the UvrB-DNA preincision complex is formed. This complex is subsequently bound by UvrC and the second UvrB is released. If no lesion is found, the DNA wraps around the other UvrB subunit that will check the other stand for damage. The polypeptide is UvrABC system protein B (Staphylococcus epidermidis (strain ATCC 12228 / FDA PCI 1200)).